We begin with the raw amino-acid sequence, 347 residues long: Ataxin-7-like protein 3 (347 aa).

The SGF11-type zinc-finger motif lies at Cys-84–Cys-105. Residues Ala-116 to Asn-125 show a composition bias toward low complexity. The disordered stretch occupies residues Ala-116 to Lys-184. Ser-129 and Ser-131 each carry phosphoserine. The segment covering Asp-132 to Asp-141 has biased composition (acidic residues). The SCA7 domain maps to Leu-196–Thr-263. Low complexity predominate over residues Asp-275–Ser-288. Residues Asp-275 to Asn-347 form a disordered region. Residues Ser-278, Ser-281, and Ser-326 each carry the phosphoserine modification.

The protein belongs to the SGF11 family. As to quaternary structure, component of some SAGA transcription coactivator-HAT complexes, at least composed of ATXN7, ATXN7L3, ENY2, GCN5L2, SUPT3H, TAF10, TRRAP and USP22. Within the SAGA complex, ENY2, ATXN7, ATXN7L3, and USP22 form an additional subcomplex of SAGA called the DUB module (deubiquitination module). Interacts directly with ENY2 and USP22.

Its subcellular location is the nucleus. Component of the transcription regulatory histone acetylation (HAT) complex SAGA, a multiprotein complex that activates transcription by remodeling chromatin and mediating histone acetylation and deubiquitination. Within the SAGA complex, participates in a subcomplex that specifically deubiquitinates both histones H2A and H2B. The SAGA complex is recruited to specific gene promoters by activators such as MYC, where it is required for transcription. Required for nuclear receptor-mediated transactivation. Within the complex, it is required to recruit USP22 and ENY2 into the SAGA complex. Regulates H2B monoubiquitination (H2Bub1) levels. Affects subcellular distribution of ENY2, USP22 and ATXN7L3B. In Homo sapiens (Human), this protein is Ataxin-7-like protein 3.